A 156-amino-acid chain; its full sequence is Small ribosomal subunit protein uS7 (156 aa).

Belongs to the universal ribosomal protein uS7 family. In terms of assembly, part of the 30S ribosomal subunit. Contacts proteins S9 and S11.

In terms of biological role, one of the primary rRNA binding proteins, it binds directly to 16S rRNA where it nucleates assembly of the head domain of the 30S subunit. Is located at the subunit interface close to the decoding center, probably blocks exit of the E-site tRNA. This chain is Small ribosomal subunit protein uS7, found in Buchnera aphidicola subsp. Cinara cedri (strain Cc).